Here is a 512-residue protein sequence, read N- to C-terminus: Cytochrome P450 monooxygenase hkm5 (512 aa).

The helical transmembrane segment at 18–38 (LIQLVRALLWVLVITIGGAIV) threads the bilayer. Residues asparagine 184, asparagine 263, asparagine 275, asparagine 374, and asparagine 419 are each glycosylated (N-linked (GlcNAc...) asparagine). Cysteine 456 is a binding site for heme.

Belongs to the cytochrome P450 family. Heme serves as cofactor.

It localises to the membrane. It catalyses the reaction hancockiamide A + reduced [NADPH--hemoprotein reductase] + O2 = hancockiamide G + oxidized [NADPH--hemoprotein reductase] + 2 H2O + H(+). The catalysed reaction is hancockiamide B + reduced [NADPH--hemoprotein reductase] + O2 = hancockiamide C + oxidized [NADPH--hemoprotein reductase] + 2 H2O + H(+). It carries out the reaction hancockiamide D + reduced [NADPH--hemoprotein reductase] + O2 = hancockiamide H + oxidized [NADPH--hemoprotein reductase] + 2 H2O + H(+). It participates in secondary metabolite biosynthesis. Functionally, cytochrome P450 monooxygenase; part of the gene cluster that mediates the biosynthesis of hancockiamides, an unusual new family of N-cinnamoylated piperazines. The NRPS hkm10 and the NmrA-like reductase hkm9 are proposed to convert two molecules of L-Phe to the intermediary piperazine called xenocockiamide A. Xenocockiamide A is then converted to hancockiamide D via a series of hydroxylations and O-methylations. The tyrosinase hkm6 may catalyze an aromatic hydroxylation, then the 2-oxoglutarate-dependent Fe(II) dioxygenase hkm4 and the FAD-dependent phenol hydroxylase hkm7 may catalyze consecutive hydroxylations to install 2 more hydroxy groups, and the methyltransferase hkm8 probably catalyzes two methylations using 2 molecules of S-adenosyl-L-methionine (SAM). The NRPS hkm11 activates and transfers trans-cinnamate supplied by the PAL hkm12 to hancockiamide D and produces hancockiamide A. NRPS Hkm11 has the flexibility to tolerate the bulky hancockiamide G as a substrate and the absence of the acetyl-transferase hkm3 opens up the opportunity for hkm11 to introduce a second N-cinnamoyl moiety. The cytochrome P450 monooxygenase hkm5 catalyzes the methylenedioxy bridge formation, converting hancockiamide A into hancockiamide G. Hkm5 can also convert hancockiamide B into hancockiamide C, and hancockiamide D into hancockiamide H. The N-acetyltransferase hkm3 finally transfers an acetyl group to 1-N of piperazine, converting hancockiamide A into hancockiamide B and hancockiamide G into hancockiamide C. The chain is Cytochrome P450 monooxygenase hkm5 from Aspergillus hancockii.